The following is a 320-amino-acid chain: Olfactory receptor 12D1 (320 aa).

Over 1 to 23 (MLNTTSVTEFLLLGVTDIQELQP) the chain is Extracellular. Residue asparagine 3 is glycosylated (N-linked (GlcNAc...) asparagine). A helical transmembrane segment spans residues 24 to 44 (FLFVVFLTIYFISVAGNGAIL). Residues 45–55 (MIVISDPRLHS) are Cytoplasmic-facing. Residues 56–76 (PMYFFLGNLSCLDICYSSVTL) form a helical membrane-spanning segment. The Extracellular segment spans residues 77-97 (PKMLQNFLSAHKAISFLGCIS). Cysteine 95 and cysteine 177 form a disulfide bridge. Residues 98–118 (QLHFFHFLGSTEAMLLAVMAF) form a helical membrane-spanning segment. The Cytoplasmic portion of the chain corresponds to 119 to 141 (DRFVAICKPLRYTVIMNPQLCTQ). A helical membrane pass occupies residues 142–162 (MAITIWMIGFFHALLHSLMTS). Residues 163-203 (RLNFCGSNRIYHFFCDVKPLLKLACGNTELNQWLLSTVTGT) lie on the Extracellular side of the membrane. The chain crosses the membrane as a helical span at residues 204-224 (IAMGPFFLTLLSYFYIITHLF). The Cytoplasmic portion of the chain corresponds to 225–238 (FKTHSFSMLRKALS). Residues 239–259 (TCASHFMVVILLYAPVLFTYI) form a helical membrane-spanning segment. Topologically, residues 260–270 (HHASGTSMDQD) are extracellular. The helical transmembrane segment at 271–291 (RITAIMYTVVTPVLNPLIYTL) threads the bilayer. Residues 292–320 (RNKEVKGAFNRAMKRWLWPKEILKNSSEA) are Cytoplasmic-facing.

The protein belongs to the G-protein coupled receptor 1 family.

Its subcellular location is the cell membrane. Functionally, odorant receptor. The chain is Olfactory receptor 12D1 (OR12D1) from Homo sapiens (Human).